The primary structure comprises 58 residues: U7-ctenitoxin-Pr1a (58 aa).

6 disulfide bridges follow: Cys-2–Cys-16, Cys-9–Cys-22, Cys-13–Cys-48, Cys-15–Cys-40, Cys-18–Cys-55, and Cys-24–Cys-38.

Expressed by the venom gland.

Its subcellular location is the secreted. Its function is as follows. Probable neurotoxin. The sequence is that of U7-ctenitoxin-Pr1a from Phoneutria reidyi (Brazilian Amazonian armed spider).